Consider the following 168-residue polypeptide: Gremlin-2 (168 aa).

The N-terminal stretch at methionine 1–alanine 21 is a signal peptide. The N-linked (GlcNAc...) asparagine glycan is linked to asparagine 40. Disulfide bonds link cysteine 73–cysteine 123, cysteine 87–cysteine 137, cysteine 97–cysteine 155, and cysteine 101–cysteine 157. In terms of domain architecture, CTCK spans cysteine 73–serine 163. The N-linked (GlcNAc...) asparagine glycan is linked to asparagine 161.

Belongs to the DAN family. Homodimer. Interacts with BMP2, BMP4 and BMP7, but has lower affinity for BMP7 than for BMP2 and BMP4. Binds heparin; this impairs the interaction with BMP2. N-glycosylated.

It is found in the secreted. In terms of biological role, cytokine that inhibits the activity of BMP2 and BMP4 in a dose-dependent manner, and thereby modulates signaling by BMP family members. Contributes to the regulation of embryonic morphogenesis via BMP family members. Antagonizes BMP4-induced suppression of progesterone production in granulosa cells. The sequence is that of Gremlin-2 (GREM2) from Homo sapiens (Human).